We begin with the raw amino-acid sequence, 169 residues long: Protein FAM106A (169 aa).

It belongs to the FAM106 family.

The polypeptide is Protein FAM106A (FAM106A) (Homo sapiens (Human)).